Reading from the N-terminus, the 177-residue chain is Adenine phosphoribosyltransferase (177 aa).

It belongs to the purine/pyrimidine phosphoribosyltransferase family. As to quaternary structure, homodimer.

The protein resides in the cytoplasm. The catalysed reaction is AMP + diphosphate = 5-phospho-alpha-D-ribose 1-diphosphate + adenine. It participates in purine metabolism; AMP biosynthesis via salvage pathway; AMP from adenine: step 1/1. Its function is as follows. Catalyzes a salvage reaction resulting in the formation of AMP, that is energically less costly than de novo synthesis. This Chlorobium chlorochromatii (strain CaD3) protein is Adenine phosphoribosyltransferase.